We begin with the raw amino-acid sequence, 169 residues long: uncharacterized protein (169 aa).

At Ser165 the chain carries Phosphoserine.

This is an uncharacterized protein from Drosophila melanogaster (Fruit fly).